Consider the following 459-residue polypeptide: Ribulose bisphosphate carboxylase (459 aa).

Residue Asn111 participates in substrate binding. The Proton acceptor role is filled by Lys166. Lys168 contributes to the substrate binding site. Residues Lys191, Asp193, and Glu194 each contribute to the Mg(2+) site. Residue Lys191 is modified to N6-carboxylysine. His287 functions as the Proton acceptor in the catalytic mechanism. Residues Arg288, His321, and Ser368 each contribute to the substrate site.

It belongs to the RuBisCO large chain family. Type II subfamily. As to quaternary structure, homodimer. Requires Mg(2+) as cofactor.

The catalysed reaction is 2 (2R)-3-phosphoglycerate + 2 H(+) = D-ribulose 1,5-bisphosphate + CO2 + H2O. It carries out the reaction D-ribulose 1,5-bisphosphate + O2 = 2-phosphoglycolate + (2R)-3-phosphoglycerate + 2 H(+). Its function is as follows. RuBisCO catalyzes two reactions: the carboxylation of D-ribulose 1,5-bisphosphate, the primary event in carbon dioxide fixation, as well as the oxidative fragmentation of the pentose substrate. Both reactions occur simultaneously and in competition at the same active site. The protein is Ribulose bisphosphate carboxylase of Cereibacter sphaeroides (Rhodobacter sphaeroides).